We begin with the raw amino-acid sequence, 212 residues long: Thymidylate kinase (212 aa).

Residue 11 to 18 (GLEGAGKT) participates in ATP binding.

This sequence belongs to the thymidylate kinase family.

It catalyses the reaction dTMP + ATP = dTDP + ADP. Its function is as follows. Phosphorylation of dTMP to form dTDP in both de novo and salvage pathways of dTTP synthesis. This Buchnera aphidicola subsp. Schizaphis graminum (strain Sg) protein is Thymidylate kinase.